Consider the following 173-residue polypeptide: ATP-dependent protease subunit HslV (173 aa).

Residue Thr2 is part of the active site. Na(+) is bound by residues Gly157, Cys160, and Thr163.

This sequence belongs to the peptidase T1B family. HslV subfamily. In terms of assembly, a double ring-shaped homohexamer of HslV is capped on each side by a ring-shaped HslU homohexamer. The assembly of the HslU/HslV complex is dependent on binding of ATP.

It localises to the cytoplasm. It carries out the reaction ATP-dependent cleavage of peptide bonds with broad specificity.. Allosterically activated by HslU binding. Functionally, protease subunit of a proteasome-like degradation complex believed to be a general protein degrading machinery. In Nitrosomonas eutropha (strain DSM 101675 / C91 / Nm57), this protein is ATP-dependent protease subunit HslV.